The sequence spans 375 residues: MPPKKKQTAAAGKDRSKALELAMAQIEKDFGKGAIMRLGDDTRPPIQAISSGNIAINAALGIGGFPRGRVVEIYGPESSGKTTVALHAIAEAQRAGGIAAFVDAEHALDPEYARALGVDTDALLVSQPDTGEQALEIADMLIRSGAIDIIVVDSVAALTPKAEIDGDMGDSHVGLQARLMSQALRKMTGALYQTGTTAIFINQLREKIGVMFGSPETTTGGKALKFYASVRCDIRRIQALKDGQDVVGNRTRLKVVKNKVSPPFKIAEFDILYGEGISREGSIIDLGVETGLIKKSGSWFTYDGDQLGQGKEKAREFLKNNRDLSAELEDRIARELKIGPYAKMKDEQTEEAAGDQMDEDKPIDLSPNFDDDDAN.

Position 75–82 (75–82 (GPESSGKT)) interacts with ATP. Residues 339-375 (GPYAKMKDEQTEEAAGDQMDEDKPIDLSPNFDDDDAN) are disordered. A compositionally biased stretch (acidic residues) spans 348 to 358 (QTEEAAGDQMD).

This sequence belongs to the RecA family.

Its subcellular location is the cytoplasm. Can catalyze the hydrolysis of ATP in the presence of single-stranded DNA, the ATP-dependent uptake of single-stranded DNA by duplex DNA, and the ATP-dependent hybridization of homologous single-stranded DNAs. It interacts with LexA causing its activation and leading to its autocatalytic cleavage. In Corynebacterium jeikeium (strain K411), this protein is Protein RecA.